A 353-amino-acid chain; its full sequence is ATP-dependent kinase YFH7 (353 aa).

Gly31–Thr39 serves as a coordination point for ATP.

The protein belongs to the YFH7 family.

Its function is as follows. ATP-dependent kinase that could be involved in endoplasmic reticulum membrane assembly. The sequence is that of ATP-dependent kinase YFH7 (YFH7) from Saccharomyces cerevisiae (strain Lalvin EC1118 / Prise de mousse) (Baker's yeast).